Here is a 674-residue protein sequence, read N- to C-terminus: DNA ligase (674 aa).

NAD(+)-binding positions include 35 to 39, 84 to 85, and E118; these read DFEFD and SL. K120 (N6-AMP-lysine intermediate) is an active-site residue. 4 residues coordinate NAD(+): R141, E184, K297, and K321. 4 residues coordinate Zn(2+): C415, C418, C433, and C439. The BRCT domain occupies 598–674; that stretch reads QVNRNFEGVT…VSEDEFEAML (77 aa).

It belongs to the NAD-dependent DNA ligase family. LigA subfamily. The cofactor is Mg(2+). Mn(2+) is required as a cofactor.

The enzyme catalyses NAD(+) + (deoxyribonucleotide)n-3'-hydroxyl + 5'-phospho-(deoxyribonucleotide)m = (deoxyribonucleotide)n+m + AMP + beta-nicotinamide D-nucleotide.. Its function is as follows. DNA ligase that catalyzes the formation of phosphodiester linkages between 5'-phosphoryl and 3'-hydroxyl groups in double-stranded DNA using NAD as a coenzyme and as the energy source for the reaction. It is essential for DNA replication and repair of damaged DNA. The chain is DNA ligase from Pelodictyon phaeoclathratiforme (strain DSM 5477 / BU-1).